A 101-amino-acid chain; its full sequence is Citrate lyase acyl carrier protein (101 aa).

Serine 14 is subject to O-(phosphoribosyl dephospho-coenzyme A)serine.

It belongs to the CitD family. In terms of assembly, oligomer with a subunit composition of (alpha,beta,gamma)6.

It is found in the cytoplasm. Covalent carrier of the coenzyme of citrate lyase. The polypeptide is Citrate lyase acyl carrier protein (Clostridium perfringens (strain 13 / Type A)).